The sequence spans 196 residues: Translation machinery-associated protein 22 (196 aa).

One can recognise an SUI1 domain in the interval 111–182; that stretch reads IIIKRIERNK…EAKEYIEKLL (72 aa).

The protein belongs to the DENR family. In terms of assembly, interacts with the 40S ribosomal subunit.

It is found in the cytoplasm. This chain is Translation machinery-associated protein 22 (TMA22), found in Lodderomyces elongisporus (strain ATCC 11503 / CBS 2605 / JCM 1781 / NBRC 1676 / NRRL YB-4239) (Yeast).